A 28-amino-acid chain; its full sequence is 3-phytase B (28 aa).

Residues 1–28 (RDPTGCEVDQVIMVKRHGERYPSPSAGK) form a disordered region. H17 (nucleophile) is an active-site residue.

It belongs to the histidine acid phosphatase family.

It carries out the reaction 1D-myo-inositol hexakisphosphate + H2O = 1D-myo-inositol 1,2,4,5,6-pentakisphosphate + phosphate. Catalyzes the hydrolysis of inorganic orthophosphate from phytate. This is 3-phytase B (phyB) from Aspergillus ficuum.